A 56-amino-acid polypeptide reads, in one-letter code: Large ribosomal subunit protein bL33 (56 aa).

Over residues 1–12 the composition is skewed to basic and acidic residues; that stretch reads MATKGGRDKIKL. Positions 1–24 are disordered; it reads MATKGGRDKIKLESTAGTGHFYTT. Over residues 15–24 the composition is skewed to polar residues; it reads TAGTGHFYTT.

Belongs to the bacterial ribosomal protein bL33 family.

This is Large ribosomal subunit protein bL33 from Paracidovorax citrulli (strain AAC00-1) (Acidovorax citrulli).